Here is a 301-residue protein sequence, read N- to C-terminus: Phosphatidylglycerol--prolipoprotein diacylglyceryl transferase (301 aa).

7 helical membrane-spanning segments follow: residues 17 to 37 (LAVR…IVVG), 59 to 79 (MLFY…VLFY), 97 to 117 (GGMS…LFAW), 129 to 149 (FVAP…FING), 203 to 223 (PSQL…LWLF), 230 to 250 (VGAA…TVEF), and 257 to 277 (FLGL…PMII). A 1,2-diacyl-sn-glycero-3-phospho-(1'-sn-glycerol) is bound at residue arginine 142.

This sequence belongs to the Lgt family.

Its subcellular location is the cell inner membrane. The catalysed reaction is L-cysteinyl-[prolipoprotein] + a 1,2-diacyl-sn-glycero-3-phospho-(1'-sn-glycerol) = an S-1,2-diacyl-sn-glyceryl-L-cysteinyl-[prolipoprotein] + sn-glycerol 1-phosphate + H(+). It functions in the pathway protein modification; lipoprotein biosynthesis (diacylglyceryl transfer). Catalyzes the transfer of the diacylglyceryl group from phosphatidylglycerol to the sulfhydryl group of the N-terminal cysteine of a prolipoprotein, the first step in the formation of mature lipoproteins. The polypeptide is Phosphatidylglycerol--prolipoprotein diacylglyceryl transferase (Paraburkholderia phymatum (strain DSM 17167 / CIP 108236 / LMG 21445 / STM815) (Burkholderia phymatum)).